A 162-amino-acid polypeptide reads, in one-letter code: Mitochondrial intermembrane space import and assembly protein 40 homolog (162 aa).

The disordered stretch occupies residues 1–61 (MGQAQSDENS…DNENESLEAK (61 aa)). Low complexity predominate over residues 9–18 (NSIPTTTTTN). Cystine bridges form between cysteine 68/cysteine 70, cysteine 79/cysteine 112, and cysteine 89/cysteine 102. One can recognise a CHCH domain in the interval 76-120 (NGSCGSQFSEAFLCFLKSTAEEKGSDCVNPFVALQSCINANPDAF). 2 consecutive short sequence motifs (cx9C motif) follow at residues 79–89 (CGSQFSEAFLC) and 102–112 (CVNPFVALQSC). Positions 119 to 162 (AFSKSVTGDEKETEKKEEQPPVQDHRIIPPLWAKDPPRSGNSKL) are disordered. Residues 125-145 (TGDEKETEKKEEQPPVQDHRI) show a composition bias toward basic and acidic residues.

The protein resides in the mitochondrion intermembrane space. Its subcellular location is the peroxisome matrix. In terms of biological role, required for the import and folding of small cysteine-containing proteins in the mitochondrial intermembrane space. Involved in the mitochondrial oxidative folding of the copper-zinc superoxide dismutase CSD1, the copper chaperone for superoxide dismutase CCS, and subunits of the mitochondrial membrane respiratory chain NADH dehydrogenase (Complex I). Involved in the peroxisomal oxidative folding of the copper-zinc superoxide dismutase CSD3, and the fatty acid beta-oxidation multifunctional protein AIM1. The polypeptide is Mitochondrial intermembrane space import and assembly protein 40 homolog (Arabidopsis thaliana (Mouse-ear cress)).